The chain runs to 233 residues: Large ribosomal subunit protein eL6x (233 aa).

A compositionally biased stretch (basic and acidic residues) spans 48–72; sequence HDAKSKVDAPVEKPPKFYPAEDVKK. The tract at residues 48–80 is disordered; the sequence is HDAKSKVDAPVEKPPKFYPAEDVKKPLPNRRTA.

Belongs to the eukaryotic ribosomal protein eL6 family.

The polypeptide is Large ribosomal subunit protein eL6x (RPL6C) (Arabidopsis thaliana (Mouse-ear cress)).